Reading from the N-terminus, the 2701-residue chain is Centromere-associated protein E (2701 aa).

A Kinesin motor domain is found at 6–329; it reads AVAVCVRVRP…LQFASTAKYM (324 aa). Residue 86–93 coordinates ATP; sequence GQTASGKT. The stretch at 336 to 2590 forms a coiled coil; that stretch reads NEVSTDEALL…SNEVKTWKER (2255 aa). Phosphoserine is present on residues S611 and S2083. The interval 2126-2476 is kinetochore-binding domain; the sequence is KEIEFQKELS…IDLEKMKNAK (351 aa). The interval 2355–2376 is disordered; the sequence is SGAQVNPTTQDNKNPHVTSRAT. Residue S2389 is modified to Phosphoserine. Residues 2508–2527 show a composition bias toward polar residues; the sequence is QAQDTSVISEHTDPQPSNKP. Disordered stretches follow at residues 2508–2533 and 2588–2701; these read QAQD…CGGG and KERT…CKTQ. The interval 2510–2698 is globular autoinhibitory domain; the sequence is QDTSVISEHT…ASSGKDVPEC (189 aa). Residues 2588–2600 are compositionally biased toward basic and acidic residues; it reads KERTLKREAHKQV. Polar residues predominate over residues 2601 to 2625; sequence TCENSPKSPKVTGTASKKKQITPSQ. Residues 2626 to 2640 are compositionally biased toward basic and acidic residues; that stretch reads CKERNLQDPVPKESP. A phosphoserine mark is found at S2639, S2647, and S2651. Residue C2698 is modified to Cysteine methyl ester. C2698 carries S-farnesyl cysteine lipidation. The propeptide at 2699 to 2701 is removed in mature form; that stretch reads KTQ.

It belongs to the TRAFAC class myosin-kinesin ATPase superfamily. Kinesin family. Monomer. Interacts with CENPF. Interacts with BUB1B. Interacts with SEPT7. Interacts with KIF18A. Interacts with PRC1. Interacts with NUF2; this interaction determines kinetochore localization. Interacts with SKAP; this interaction greatly favors SKAP binding to microtubules. Interacts with TRAPPC12. Interacts with CTCF. In terms of processing, the C-terminal inhibitory domain is phosphorylated. Phosphorylation relieves autoinhibition of the kinetochore motor. Sumoylated with SUMO2 and SUMO3. The sumoylation mediates the association to the kinetochore.

The protein resides in the chromosome. The protein localises to the centromere. Its subcellular location is the kinetochore. It localises to the cytoplasm. It is found in the cytoskeleton. The protein resides in the spindle. Its function is as follows. Microtubule plus-end-directed kinetochore motor which plays an important role in chromosome congression, microtubule-kinetochore conjugation and spindle assembly checkpoint activation. Drives chromosome congression (alignment of chromosomes at the spindle equator resulting in the formation of the metaphase plate) by mediating the lateral sliding of polar chromosomes along spindle microtubules towards the spindle equator and by aiding the establishment and maintenance of connections between kinetochores and spindle microtubules. The transport of pole-proximal chromosomes towards the spindle equator is favored by microtubule tracks that are detyrosinated. Acts as a processive bi-directional tracker of dynamic microtubule tips; after chromosomes have congressed, continues to play an active role at kinetochores, enhancing their links with dynamic microtubule ends. Suppresses chromosome congression in NDC80-depleted cells and contributes positively to congression only when microtubules are stabilized. Plays an important role in the formation of stable attachments between kinetochores and spindle microtubules The stabilization of kinetochore-microtubule attachment also requires CENPE-dependent localization of other proteins to the kinetochore including BUB1B, MAD1 and MAD2. Plays a role in spindle assembly checkpoint activation (SAC) via its interaction with BUB1B resulting in the activation of its kinase activity, which is important for activating SAC. Necessary for the mitotic checkpoint signal at individual kinetochores to prevent aneuploidy due to single chromosome loss. The sequence is that of Centromere-associated protein E (CENPE) from Homo sapiens (Human).